We begin with the raw amino-acid sequence, 350 residues long: Arginine N-succinyltransferase (350 aa).

Leucine 125 contacts succinyl-CoA. The Proton donor role is filled by histidine 229.

It belongs to the arginine N-succinyltransferase family.

It carries out the reaction succinyl-CoA + L-arginine = N(2)-succinyl-L-arginine + CoA + H(+). The protein operates within amino-acid degradation; L-arginine degradation via AST pathway; L-glutamate and succinate from L-arginine: step 1/5. Catalyzes the transfer of succinyl-CoA to arginine to produce N(2)-succinylarginine. The protein is Arginine N-succinyltransferase of Yersinia pseudotuberculosis serotype IB (strain PB1/+).